A 503-amino-acid polypeptide reads, in one-letter code: Rhomboid-type serine protease 2 (503 aa).

The span at 1 to 11 shows a compositional bias: polar residues; it reads MAAQSYYNGAY. The disordered stretch occupies residues 1–66; the sequence is MAAQSYYNGA…SLRYSQQSIG (66 aa). The Cytoplasmic portion of the chain corresponds to 1–136; the sequence is MAAQSYYNGA…QKKKGFFQKK (136 aa). Residues 137-157 form a helical membrane-spanning segment; the sequence is IAYVTYILTIAQIIVFIVELV. Residues 158 to 253 are Extracellular-facing; sequence KMGQLTGSPI…DKPAPDQWFR (96 aa). Residues 254–274 form a helical membrane-spanning segment; it reads FIIPMFLHSGFVHIGFNLLVQ. Residues 275–283 lie on the Cytoplasmic side of the membrane; the sequence is MTMGADMER. The helical transmembrane segment at 284–304 threads the bilayer; the sequence is MIGWWRYGLVYLSSGIWGFVL. The Extracellular segment spans residues 305–316; that stretch reads GGNYAGQGEASC. A helical transmembrane segment spans residues 317–337; sequence GCSGALFGILALFVLDLLYGW. S319 acts as the Nucleophile in catalysis. Residues 338 to 342 lie on the Cytoplasmic side of the membrane; the sequence is NDRQN. Residues 343–363 traverse the membrane as a helical segment; the sequence is PWVELIIMVLGIAVSFVLGLL. The Extracellular portion of the chain corresponds to 364 to 365; that stretch reads PG. Residues 366 to 386 form a helical membrane-spanning segment; the sequence is LDNFSHLGGFTMGLALGLCVM. H371 is a catalytic residue. Residues 387–449 are Cytoplasmic-facing; sequence RSPNALRERI…FAGRKPLWWA (63 aa). Residues 450–470 traverse the membrane as a helical segment; that stretch reads WWLVRLGALVAVLIGFILLIV. Residues 471–503 lie on the Extracellular side of the membrane; the sequence is NFYKYPSSNCSWCYRFSCLPVNGWCDQGNLFSR.

It belongs to the peptidase S54 family.

The protein localises to the membrane. The enzyme catalyses Cleaves type-1 transmembrane domains using a catalytic dyad composed of serine and histidine that are contributed by different transmembrane domains.. In terms of biological role, probable rhomboid-type serine protease that catalyzes intramembrane proteolysis. The protein is Rhomboid-type serine protease 2 of Emericella nidulans (strain FGSC A4 / ATCC 38163 / CBS 112.46 / NRRL 194 / M139) (Aspergillus nidulans).